The sequence spans 560 residues: Protein SINE1 (560 aa).

Gly2 is subject to N-acetylglycine. An ARMADILLO-type fold region spans residues 7–287 (PILRQELANL…VRGAAYEAMM (281 aa)). A KASH domain is found at 517–560 (KKKKKKMSYAKLVIAISFVVVALFATVILMVNQDDDVGYYTVPT). A helical membrane pass occupies residues 528-548 (LVIAISFVVVALFATVILMVN). The Required for nuclear localization signature appears at 557 to 560 (TVPT).

Interacts with SUN1 and SUN2. Binds to F-actin. Preferentially expressed in guards cells, but also detected in root cells.

It is found in the nucleus membrane. Its function is as follows. Plays a role in nucleus positioning in guard cells. This is Protein SINE1 from Arabidopsis thaliana (Mouse-ear cress).